Consider the following 113-residue polypeptide: Na(+)/H(+) antiporter subunit C1 (113 aa).

Helical transmembrane passes span 1–21, 28–48, and 72–92; these read MEII…YLVL, IVMG…TMGG, and LILT…VLAF.

It belongs to the CPA3 antiporters (TC 2.A.63) subunit C family. As to quaternary structure, may form a heterooligomeric complex that consists of seven subunits: mnhA1, mnhB1, mnhC1, mnhD1, mnhE1, mnhF1 and mnhG1.

The protein localises to the cell membrane. In terms of biological role, mnh complex is a Na(+)/H(+) antiporter involved in Na(+) excretion. This Staphylococcus aureus (strain JH1) protein is Na(+)/H(+) antiporter subunit C1 (mnhC1).